The chain runs to 326 residues: Delta-aminolevulinic acid dehydratase (326 aa).

Zn(2+) is bound by residues Cys119, Cys121, and Cys129. Lys198 functions as the Schiff-base intermediate with substrate in the catalytic mechanism. 5-aminolevulinate is bound by residues Arg208 and Arg220. Position 236 (Glu236) interacts with Mg(2+). The active-site Schiff-base intermediate with substrate is the Lys251. Ser277 and Tyr316 together coordinate 5-aminolevulinate.

The protein belongs to the ALAD family. As to quaternary structure, homooctamer. Zn(2+) serves as cofactor.

It carries out the reaction 2 5-aminolevulinate = porphobilinogen + 2 H2O + H(+). It functions in the pathway porphyrin-containing compound metabolism; protoporphyrin-IX biosynthesis; coproporphyrinogen-III from 5-aminolevulinate: step 1/4. In terms of biological role, catalyzes an early step in the biosynthesis of tetrapyrroles. Binds two molecules of 5-aminolevulinate per subunit, each at a distinct site, and catalyzes their condensation to form porphobilinogen. This chain is Delta-aminolevulinic acid dehydratase (hemB), found in Synechococcus elongatus (strain ATCC 33912 / PCC 7942 / FACHB-805) (Anacystis nidulans R2).